A 164-amino-acid polypeptide reads, in one-letter code: uncharacterized protein (164 aa).

It localises to the mitochondrion. This is an uncharacterized protein from Arabidopsis thaliana (Mouse-ear cress).